A 240-amino-acid chain; its full sequence is Ribosomal RNA small subunit methyltransferase G (240 aa).

Residues G79, F84, 130–131 (AE), and R149 contribute to the S-adenosyl-L-methionine site.

It belongs to the methyltransferase superfamily. RNA methyltransferase RsmG family.

The protein localises to the cytoplasm. In terms of biological role, specifically methylates the N7 position of a guanine in 16S rRNA. This Lactobacillus acidophilus (strain ATCC 700396 / NCK56 / N2 / NCFM) protein is Ribosomal RNA small subunit methyltransferase G.